Here is a 113-residue protein sequence, read N- to C-terminus: Translation initiation factor IF-1, chloroplastic (113 aa).

Positions 8-83 (REKKNPREAK…SKGRIIYRLP (76 aa)) constitute an S1-like domain. The segment at 86–113 (DSKRIEDSKDSEDLKDSEDLKDTKDSKD) is disordered.

Belongs to the IF-1 family. As to quaternary structure, component of the 30S ribosomal translation pre-initiation complex which assembles on the 30S ribosome in the order IF-2 and IF-3, IF-1 and N-formylmethionyl-tRNA(fMet); mRNA recruitment can occur at any time during PIC assembly.

The protein resides in the plastid. It is found in the chloroplast. One of the essential components for the initiation of protein synthesis. Stabilizes the binding of IF-2 and IF-3 on the 30S subunit to which N-formylmethionyl-tRNA(fMet) subsequently binds. Helps modulate mRNA selection, yielding the 30S pre-initiation complex (PIC). Upon addition of the 50S ribosomal subunit IF-1, IF-2 and IF-3 are released leaving the mature 70S translation initiation complex. The protein is Translation initiation factor IF-1, chloroplastic of Hordeum vulgare (Barley).